We begin with the raw amino-acid sequence, 148 residues long: MINTKKLLKMAKKWQQRAALKRKRISFQRSTTTTTTTTTTTSSSTAVEKGCFVVYTVDKIRFAFPLSYLNNSVFEELLKISEEEFGLRAGGPITLPFDSVFLEYLIKFIERRMDGDTEKALLMSISSARCSMQPQEQQSGYTQQLLVF.

Belongs to the ARG7 family.

It is found in the cell membrane. In terms of biological role, may promote auxin-stimulated organ elongation, such as hypocotyls, stamen filaments and petals. The polypeptide is Auxin-responsive protein SAUR65 (Arabidopsis thaliana (Mouse-ear cress)).